The primary structure comprises 151 residues: Transcriptional repressor NrdR (151 aa).

The segment at cysteine 3–cysteine 34 is a zinc-finger region. Residues proline 49–aspartate 139 form the ATP-cone domain.

This sequence belongs to the NrdR family. Zn(2+) serves as cofactor.

In terms of biological role, negatively regulates transcription of bacterial ribonucleotide reductase nrd genes and operons by binding to NrdR-boxes. The chain is Transcriptional repressor NrdR from Delftia acidovorans (strain DSM 14801 / SPH-1).